Here is a 92-residue protein sequence, read N- to C-terminus: Large ribosomal subunit protein eL34 (92 aa).

The protein belongs to the eukaryotic ribosomal protein eL34 family.

The polypeptide is Large ribosomal subunit protein eL34 (Staphylothermus marinus (strain ATCC 43588 / DSM 3639 / JCM 9404 / F1)).